Consider the following 195-residue polypeptide: MPKLGMQSIRRRQLIDATLEAINEVGMHDATIAQIARRAGVSTGIISHYFRDKNGLLEATMRDITSQLRDAVLNRLHALPQGSAELRLQAIVGGNFDETQVSSAAMKAWLAFWASSMHQPMLYRLQQVSSRRLLSNLVSEFRRELPRQQAQEAGYGLAALIDGLWLRAALSGKALDKPLAHSLTRHFITQHLPTD.

Positions 8–68 (SIRRRQLIDA…ATMRDITSQL (61 aa)) constitute an HTH tetR-type domain. The H-T-H motif DNA-binding region spans 31 to 50 (TIAQIARRAGVSTGIISHYF).

It functions in the pathway amine and polyamine biosynthesis; betaine biosynthesis via choline pathway [regulation]. In terms of biological role, repressor involved in the biosynthesis of the osmoprotectant glycine betaine. It represses transcription of the choline transporter BetT and the genes of BetAB involved in the synthesis of glycine betaine. The sequence is that of HTH-type transcriptional regulator BetI from Escherichia coli (strain UTI89 / UPEC).